The primary structure comprises 602 residues: Elongation factor 4 (602 aa).

The 183-residue stretch at 8-190 (DLIRNFSIVA…AIVHRLPPPK (183 aa)) folds into the tr-type G domain. GTP-binding positions include 20–25 (DHGKST) and 137–140 (NKID).

It belongs to the TRAFAC class translation factor GTPase superfamily. Classic translation factor GTPase family. LepA subfamily.

The protein localises to the cell inner membrane. It carries out the reaction GTP + H2O = GDP + phosphate + H(+). Its function is as follows. Required for accurate and efficient protein synthesis under certain stress conditions. May act as a fidelity factor of the translation reaction, by catalyzing a one-codon backward translocation of tRNAs on improperly translocated ribosomes. Back-translocation proceeds from a post-translocation (POST) complex to a pre-translocation (PRE) complex, thus giving elongation factor G a second chance to translocate the tRNAs correctly. Binds to ribosomes in a GTP-dependent manner. The chain is Elongation factor 4 from Cereibacter sphaeroides (strain KD131 / KCTC 12085) (Rhodobacter sphaeroides).